Consider the following 279-residue polypeptide: Hydroxyethylthiazole kinase (279 aa).

Methionine 58 provides a ligand contact to substrate. 2 residues coordinate ATP: lysine 134 and threonine 180. Glycine 207 is a binding site for substrate.

The protein belongs to the Thz kinase family. The cofactor is Mg(2+).

It catalyses the reaction 5-(2-hydroxyethyl)-4-methylthiazole + ATP = 4-methyl-5-(2-phosphooxyethyl)-thiazole + ADP + H(+). It functions in the pathway cofactor biosynthesis; thiamine diphosphate biosynthesis; 4-methyl-5-(2-phosphoethyl)-thiazole from 5-(2-hydroxyethyl)-4-methylthiazole: step 1/1. Its function is as follows. Catalyzes the phosphorylation of the hydroxyl group of 4-methyl-5-beta-hydroxyethylthiazole (THZ). The chain is Hydroxyethylthiazole kinase from Methanoculleus marisnigri (strain ATCC 35101 / DSM 1498 / JR1).